The primary structure comprises 370 residues: A-type ATP synthase subunit C (370 aa).

It belongs to the V-ATPase V0D/AC39 subunit family. As to quaternary structure, has multiple subunits with at least A(3), B(3), C, D, E, F, H, I and proteolipid K(x).

It localises to the cell membrane. In terms of biological role, component of the A-type ATP synthase that produces ATP from ADP in the presence of a proton gradient across the membrane. This chain is A-type ATP synthase subunit C, found in Pyrococcus horikoshii (strain ATCC 700860 / DSM 12428 / JCM 9974 / NBRC 100139 / OT-3).